The primary structure comprises 216 residues: Sperm microtubule inner protein 8 (216 aa).

As to quaternary structure, microtubule inner protein component of sperm flagellar doublet microtubules. As to expression, expressed in testis, prostate and placenta.

It is found in the cytoplasm. Its subcellular location is the cytoskeleton. The protein localises to the flagellum axoneme. Functionally, microtubule inner protein (MIP) part of the dynein-decorated doublet microtubules (DMTs) in flagellum axoneme. May serve to reinforce and thus stabilize the microtubule structure in the sperm flagella. The polypeptide is Sperm microtubule inner protein 8 (Homo sapiens (Human)).